The sequence spans 394 residues: uncharacterized protein (394 aa).

In terms of domain architecture, F-box spans 7–51; it reads RKVIPNMPDLILRKIFDQYDYPVLCKMERVCRRWTNIINSKFRKE.

This is an uncharacterized protein from Caenorhabditis elegans.